Reading from the N-terminus, the 446-residue chain is MEEKAGLRHLQNQQNEPSQDPHQCADPCPALHSDRNHLNKEAEAMEGQNPTCSRHESAYPIQSQVSKSKKQRNYVDGAAVDDLKNLWDRLQTLQQSLTEMPYAEGLKPLKNFTSFEELLSMGGDSLLNDLLDIQDSITQCCIRASKYLNKEGNCTSLNYYKQPFIAAVYGPTGCGKSQLLRNLMSAQLIVPTPETVFFITPQVDMIPPQEIAAWETQICEGNFLAGPENTVVPQSGSIMPRFIQMSYAQLTKDENYDVTSPNNIFANAASKGPIAIVMDECMEDLGGNRGIAKFFHAFPSKLLDRFPKCTGYSVIVVLHNMNPRRDQGGNIANLKIQAKVHMISPKVHPSQLNRFINIYTKGQPTAISLLLKDIFNYHRLNTNFDWIVYNTEPIDNCMHWMYLSPQEGLIPMYLNIQGKLYQALERIHRTLTDRQRWTRYYHSKKK.

Positions 1 to 72 are disordered; that stretch reads MEEKAGLRHL…SQVSKSKKQR (72 aa). Polar residues predominate over residues 10–21; it reads LQNQQNEPSQDP. A compositionally biased stretch (basic and acidic residues) spans 32 to 43; that stretch reads HSDRNHLNKEAE. Position 170 to 177 (170 to 177) interacts with ATP; sequence GPTGCGKS. The DNA-binding stretch occupies residues 439-446; sequence RYYHSKKK.

The protein belongs to the adenoviridae packaging protein 1 family. In terms of assembly, homodimer. Part of a genome packaging complex composed of packaging proteins 1, 2 and 3; this complex specifically binds to the packaging sequence on the left end of viral genomic DNA and performs packaging of the viral genome. Interacts with protein 33K.

It is found in the virion. Its subcellular location is the host nucleus. The protein localises to the host nucleoplasm. It localises to the host nucleolus. In terms of biological role, component of the packaging machinery which encapsidates the viral DNA into preformed capsids and transcriptional activator of the viral major late promoter (MLP). Binds, along with packaging proteins 2 and 3, to the specific packaging sequence on the left end of viral genomic DNA and displays ATPase activity thereby providing the power stroke of the packaging machinery. The activity of packaging protein IVa2 is stimulated by protein 33K which acts as a terminase. May be the protein that pumps DNA into the capsid powered by ATP hydrolysis. Specifically binds to the 5'-CG-3' nucleotides of the repeats making up the packaging sequence. Component of the DEF-A and DEF-B transcription factors that bind downstream elements of the major late promoter (MLP), and stimulate transcription from the MLP after initiation of viral DNA replication. DEF-A is a heterodimer packaging proteins 1 and 2 and DEF-B is a homodimer of packaging protein 1. In Canine adenovirus serotype 1 (strain CLL) (CAdV-1), this protein is Packaging protein 1.